Here is a 374-residue protein sequence, read N- to C-terminus: Phosphate acyltransferase (374 aa).

Residues 323–374 (AEMVDPREPESNPRRRTRPLQVYSGSGPEVLPLGSLERTSSRCPEPVEDAQP) are disordered. Basic and acidic residues predominate over residues 326-335 (VDPREPESNP).

This sequence belongs to the PlsX family. In terms of assembly, homodimer. Probably interacts with PlsY.

The protein localises to the cytoplasm. The catalysed reaction is a fatty acyl-[ACP] + phosphate = an acyl phosphate + holo-[ACP]. It functions in the pathway lipid metabolism; phospholipid metabolism. Catalyzes the reversible formation of acyl-phosphate (acyl-PO(4)) from acyl-[acyl-carrier-protein] (acyl-ACP). This enzyme utilizes acyl-ACP as fatty acyl donor, but not acyl-CoA. The chain is Phosphate acyltransferase from Synechococcus sp. (strain JA-2-3B'a(2-13)) (Cyanobacteria bacterium Yellowstone B-Prime).